Reading from the N-terminus, the 1155-residue chain is Cilia- and flagella-associated protein 251 (1155 aa).

2 stretches are compositionally biased toward basic and acidic residues: residues 1–19 (MSDA…GETE) and 31–59 (KEVE…KTGE). Disordered regions lie at residues 1 to 144 (MSDA…KLSL) and 167 to 225 (LDQI…DIQS). The span at 60–69 (EEGEEEEEKE) shows a compositional bias: acidic residues. Residues 70 to 95 (EEGKKDKKIVMEETEEKAGESQEKEA) are compositionally biased toward basic and acidic residues. Low complexity predominate over residues 99–111 (QEETTVEPQEVTE). Polar residues-rich tracts occupy residues 118–128 (TQITDSQSVTS) and 172–182 (PEEQQISSPER). Positions 201–220 (GQERRDLEPENREEGQERTV) are enriched in basic and acidic residues. WD repeat units follow at residues 341 to 383 (PVHT…IWKW), 391 to 431 (ACTL…AWYE), 442 to 481 (LLTE…VWDI), 499 to 534 (PCKL…FYDH), 537 to 597 (SIVN…VYHL), 601 to 641 (GTKL…VWNY), 647 to 684 (LFSR…ILDA), 694 to 730 (PFKY…MLVV), 737 to 780 (WEYL…GYDL), 791 to 831 (LDIH…LFNA), 837 to 883 (RKTL…ILPV), 889 to 927 (KTSA…QWKI), 965 to 1005 (YFYY…FYPS), and 1025 to 1065 (GKLI…GYTN).

It localises to the cytoplasm. The protein resides in the cytoskeleton. The protein localises to the cilium axoneme. Its subcellular location is the cell projection. It is found in the cilium. It localises to the flagellum. Its function is as follows. Involved in spermatozoa motility. May also regulate cilium motility through its role in the assembly of the axonemal radial spokes. The polypeptide is Cilia- and flagella-associated protein 251 (Pongo abelii (Sumatran orangutan)).